A 502-amino-acid polypeptide reads, in one-letter code: Probable glycine dehydrogenase (decarboxylating) subunit 2 (502 aa).

Lysine 273 is modified (N6-(pyridoxal phosphate)lysine).

Belongs to the GcvP family. C-terminal subunit subfamily. In terms of assembly, the glycine cleavage system is composed of four proteins: P, T, L and H. In this organism, the P 'protein' is a heterodimer of two subunits. Pyridoxal 5'-phosphate is required as a cofactor.

It carries out the reaction N(6)-[(R)-lipoyl]-L-lysyl-[glycine-cleavage complex H protein] + glycine + H(+) = N(6)-[(R)-S(8)-aminomethyldihydrolipoyl]-L-lysyl-[glycine-cleavage complex H protein] + CO2. The glycine cleavage system catalyzes the degradation of glycine. The P protein binds the alpha-amino group of glycine through its pyridoxal phosphate cofactor; CO(2) is released and the remaining methylamine moiety is then transferred to the lipoamide cofactor of the H protein. The sequence is that of Probable glycine dehydrogenase (decarboxylating) subunit 2 from Thermococcus onnurineus (strain NA1).